The primary structure comprises 862 residues: Linoleate 9S-lipoxygenase 1 (862 aa).

The PLAT domain maps to 34 to 161 (NDFGATIIDG…NYRYSRVFFA (128 aa)). Residues 164–862 (TYLPSQMPAA…AKGIPNSISI (699 aa)) form the Lipoxygenase domain. The tract at residues 212-241 (GRPILGGNSDHPYPRRGRTERKPNASDPSL) is disordered. Fe cation-binding residues include His-517, His-522, His-708, Asn-712, and Ile-862.

This sequence belongs to the lipoxygenase family. Monomer. Fe cation serves as cofactor.

It carries out the reaction (9Z,12Z)-octadecadienoate + O2 = (9S)-hydroperoxy-(10E,12Z)-octadecadienoate. It participates in lipid metabolism; oxylipin biosynthesis. Its function is as follows. Plant lipoxygenase may be involved in a number of diverse aspects of plant physiology including growth and development, pest resistance, and senescence or responses to wounding. It catalyzes the hydroperoxidation of lipids containing a cis,cis-1,4-pentadiene structure. In Hordeum vulgare (Barley), this protein is Linoleate 9S-lipoxygenase 1 (LOX1.1).